The primary structure comprises 356 residues: Histidinol-phosphate aminotransferase (356 aa).

Residue lysine 214 is modified to N6-(pyridoxal phosphate)lysine.

This sequence belongs to the class-II pyridoxal-phosphate-dependent aminotransferase family. Histidinol-phosphate aminotransferase subfamily. In terms of assembly, homodimer. Pyridoxal 5'-phosphate serves as cofactor.

It carries out the reaction L-histidinol phosphate + 2-oxoglutarate = 3-(imidazol-4-yl)-2-oxopropyl phosphate + L-glutamate. The protein operates within amino-acid biosynthesis; L-histidine biosynthesis; L-histidine from 5-phospho-alpha-D-ribose 1-diphosphate: step 7/9. This chain is Histidinol-phosphate aminotransferase, found in Escherichia coli O81 (strain ED1a).